The following is a 94-amino-acid chain: uncharacterized protein (94 aa).

It to M.tuberculosis Rv2632c.

This is an uncharacterized protein from Mycobacterium tuberculosis (strain CDC 1551 / Oshkosh).